We begin with the raw amino-acid sequence, 505 residues long: Glucan endo-1,3-beta-glucosidase 4 (505 aa).

Residues 1–23 form the signal peptide; the sequence is MLLPRWFAEALLLLLSILACSNA. 2 N-linked (GlcNAc...) asparagine glycosylation sites follow: N70 and N110. The Proton donor role is filled by E119. N178 and N256 each carry an N-linked (GlcNAc...) asparagine glycan. The active-site Nucleophile is E266. N298, N338, and N357 each carry an N-linked (GlcNAc...) asparagine glycan. Residues C363 and C426 are joined by a disulfide bond. N453 is a glycosylation site (N-linked (GlcNAc...) asparagine). A474 carries the GPI-anchor amidated alanine lipid modification. Residues 475–505 constitute a propeptide, removed in mature form; that stretch reads NARIIFSYHLPILAPLALTLLQLLLQHDRLL.

It belongs to the glycosyl hydrolase 17 family. Post-translationally, contains two additional disulfide bonds.

The protein localises to the cell membrane. It catalyses the reaction Hydrolysis of (1-&gt;3)-beta-D-glucosidic linkages in (1-&gt;3)-beta-D-glucans.. This is Glucan endo-1,3-beta-glucosidase 4 from Arabidopsis thaliana (Mouse-ear cress).